The chain runs to 509 residues: Aromatase (509 aa).

Cys437 lines the heme pocket.

It belongs to the cytochrome P450 family. The cofactor is heme.

The protein resides in the membrane. The enzyme catalyses testosterone + 3 reduced [NADPH--hemoprotein reductase] + 3 O2 = 17beta-estradiol + formate + 3 oxidized [NADPH--hemoprotein reductase] + 4 H2O + 4 H(+). It carries out the reaction androst-4-ene-3,17-dione + 3 reduced [NADPH--hemoprotein reductase] + 3 O2 = estrone + formate + 3 oxidized [NADPH--hemoprotein reductase] + 4 H2O + 4 H(+). In terms of biological role, catalyzes the formation of aromatic C18 estrogens from C19 androgens. This is Aromatase (CYP19A1) from Taeniopygia guttata (Zebra finch).